We begin with the raw amino-acid sequence, 253 residues long: Tryptophan synthase alpha chain (253 aa).

Active-site proton acceptor residues include E47 and D58.

The protein belongs to the TrpA family. As to quaternary structure, tetramer of two alpha and two beta chains.

The enzyme catalyses (1S,2R)-1-C-(indol-3-yl)glycerol 3-phosphate + L-serine = D-glyceraldehyde 3-phosphate + L-tryptophan + H2O. It functions in the pathway amino-acid biosynthesis; L-tryptophan biosynthesis; L-tryptophan from chorismate: step 5/5. Functionally, the alpha subunit is responsible for the aldol cleavage of indoleglycerol phosphate to indole and glyceraldehyde 3-phosphate. This is Tryptophan synthase alpha chain from Lactococcus lactis subsp. cremoris (strain SK11).